The primary structure comprises 280 residues: Manganese import system permease protein ScaB (280 aa).

The next 8 helical transmembrane spans lie at alanine 18–leucine 38, isoleucine 61–isoleucine 81, threonine 94–alanine 114, threonine 139–leucine 159, valine 174–glutamine 194, valine 196–alanine 216, methionine 222–tyrosine 242, and isoleucine 246–isoleucine 266.

This sequence belongs to the ABC-3 integral membrane protein family.

It localises to the cell membrane. Functionally, part of an ABC transporter complex involved in manganese import. This Streptococcus parasanguinis protein is Manganese import system permease protein ScaB.